A 641-amino-acid polypeptide reads, in one-letter code: Methionine--tRNA ligase (641 aa).

The 'HIGH' region motif lies at 13-23 (YYPSAKLHIGN). Zn(2+) is bound by residues Cys-128, Cys-131, Cys-145, and Cys-148. The 'KMSKS' region motif lies at 298–302 (KMSKS). An ATP-binding site is contributed by Lys-301. A tRNA-binding domain is found at 539–641 (DFDKIDLRVV…GELPTGSQVR (103 aa)).

The protein belongs to the class-I aminoacyl-tRNA synthetase family. MetG type 2A subfamily. As to quaternary structure, homodimer. Requires Zn(2+) as cofactor.

It is found in the cytoplasm. The catalysed reaction is tRNA(Met) + L-methionine + ATP = L-methionyl-tRNA(Met) + AMP + diphosphate. Functionally, is required not only for elongation of protein synthesis but also for the initiation of all mRNA translation through initiator tRNA(fMet) aminoacylation. In Clostridium tetani (strain Massachusetts / E88), this protein is Methionine--tRNA ligase.